Reading from the N-terminus, the 853-residue chain is DNA mismatch repair protein MutS (853 aa).

An ATP-binding site is contributed by 614 to 621 (GPNMGGKS).

This sequence belongs to the DNA mismatch repair MutS family.

Its function is as follows. This protein is involved in the repair of mismatches in DNA. It is possible that it carries out the mismatch recognition step. This protein has a weak ATPase activity. The polypeptide is DNA mismatch repair protein MutS (Escherichia coli (strain SMS-3-5 / SECEC)).